A 194-amino-acid polypeptide reads, in one-letter code: uncharacterized protein (194 aa).

The first 24 residues, 1–24 (MRKFVAFFVIVALAALLAGCGGQG), serve as a signal peptide directing secretion.

This is an uncharacterized protein from Archaeoglobus fulgidus (strain ATCC 49558 / DSM 4304 / JCM 9628 / NBRC 100126 / VC-16).